The following is a 749-amino-acid chain: Semaphorin-3B (749 aa).

Residues 1–24 (MGRAGAAAVIPGLALLWAVGLGSA) form the signal peptide. Residues 30 to 513 (RLRLSFQELQ…SRSAVAQIAL (484 aa)) enclose the Sema domain. A glycan (N-linked (GlcNAc...) asparagine) is linked at asparagine 82. Cysteine 102 and cysteine 113 are oxidised to a cystine. Asparagine 124 carries N-linked (GlcNAc...) asparagine glycosylation. 3 disulfide bridges follow: cysteine 131–cysteine 140, cysteine 269–cysteine 380, and cysteine 293–cysteine 340. An N-linked (GlcNAc...) asparagine glycan is attached at asparagine 427. Disulfide bonds link cysteine 516/cysteine 534 and cysteine 644/cysteine 710. The region spanning 573-659 (PALLEHKVFG…GFTQPLRRLS (87 aa)) is the Ig-like C2-type domain. The interval 702–749 (GSANSLRMCRPQPALQSLPLESRRKGRNRRTHAPEPRAERGPRSATHW) is disordered. Residues 733-743 (HAPEPRAERGP) show a composition bias toward basic and acidic residues.

It belongs to the semaphorin family. In terms of tissue distribution, expressed abundantly but differentially in a variety of neural and nonneural tissues.

The protein resides in the secreted. Its subcellular location is the endoplasmic reticulum. Its function is as follows. Inhibits axonal extension by providing local signals to specify territories inaccessible for growing axons. This Homo sapiens (Human) protein is Semaphorin-3B (SEMA3B).